The primary structure comprises 451 residues: Exodeoxyribonuclease 7 large subunit (451 aa).

The protein belongs to the XseA family. In terms of assembly, heterooligomer composed of large and small subunits.

The protein resides in the cytoplasm. It carries out the reaction Exonucleolytic cleavage in either 5'- to 3'- or 3'- to 5'-direction to yield nucleoside 5'-phosphates.. Bidirectionally degrades single-stranded DNA into large acid-insoluble oligonucleotides, which are then degraded further into small acid-soluble oligonucleotides. This is Exodeoxyribonuclease 7 large subunit from Neisseria meningitidis serogroup B (strain ATCC BAA-335 / MC58).